Reading from the N-terminus, the 300-residue chain is Coatomer subunit epsilon (300 aa).

It belongs to the COPE family. Oligomeric complex that consists of at least the alpha, beta, beta', gamma, delta, epsilon and zeta subunits.

Its subcellular location is the cytoplasm. It is found in the golgi apparatus membrane. The protein resides in the cytoplasmic vesicle. It localises to the COPI-coated vesicle membrane. In terms of biological role, the coatomer is a cytosolic protein complex that binds to dilysine motifs and reversibly associates with Golgi non-clathrin-coated vesicles, which further mediate biosynthetic protein transport from the ER, via the Golgi up to the trans Golgi network. The coatomer complex is required for budding from Golgi membranes, and is essential for the retrograde Golgi-to-ER transport of dilysine-tagged proteins. This chain is Coatomer subunit epsilon (cope), found in Dictyostelium discoideum (Social amoeba).